The chain runs to 844 residues: Meiotically up-regulated gene 61 protein (844 aa).

2 disordered regions span residues 333 to 354 (ENNS…PQSQ) and 384 to 415 (NFGL…EISS). Residues 384 to 394 (NFGLEASNTST) are compositionally biased toward polar residues. Residues 395 to 407 (PEKKKFDSQKPDD) are compositionally biased toward basic and acidic residues. The chain crosses the membrane as a helical span at residues 459 to 479 (VVNSLWLVLLVVPLLGFVGFW). 605–612 (AKNLNGKS) serves as a coordination point for ATP. Residues 705–725 (VISCWRIYLLIGILAAITGTV) form a helical membrane-spanning segment.

In terms of assembly, interacts with sad1.

The protein resides in the endoplasmic reticulum membrane. It is found in the nucleus membrane. In terms of biological role, required for correct meiotic chromosome segregation. This chain is Meiotically up-regulated gene 61 protein (mug61), found in Schizosaccharomyces pombe (strain 972 / ATCC 24843) (Fission yeast).